A 76-amino-acid chain; its full sequence is Translation initiation factor IF-1 (76 aa).

The S1-like domain occupies 1–72 (MAKKDVVVMQ…NKGRIVKREK (72 aa)).

It belongs to the IF-1 family. In terms of assembly, component of the 30S ribosomal translation pre-initiation complex which assembles on the 30S ribosome in the order IF-2 and IF-3, IF-1 and N-formylmethionyl-tRNA(fMet); mRNA recruitment can occur at any time during PIC assembly.

The protein resides in the cytoplasm. Its function is as follows. One of the essential components for the initiation of protein synthesis. Stabilizes the binding of IF-2 and IF-3 on the 30S subunit to which N-formylmethionyl-tRNA(fMet) subsequently binds. Helps modulate mRNA selection, yielding the 30S pre-initiation complex (PIC). Upon addition of the 50S ribosomal subunit IF-1, IF-2 and IF-3 are released leaving the mature 70S translation initiation complex. This chain is Translation initiation factor IF-1, found in Petrotoga mobilis (strain DSM 10674 / SJ95).